The primary structure comprises 679 residues: Methionine--tRNA ligase (679 aa).

Residues P15–H25 carry the 'HIGH' region motif. Zn(2+) contacts are provided by C146, C149, C159, and C162. A 'KMSKS' region motif is present at residues K332 to S336. Position 335 (K335) interacts with ATP. The 102-residue stretch at D578–K679 folds into the tRNA-binding domain.

It belongs to the class-I aminoacyl-tRNA synthetase family. MetG type 1 subfamily. Homodimer. Zn(2+) is required as a cofactor.

The protein localises to the cytoplasm. It catalyses the reaction tRNA(Met) + L-methionine + ATP = L-methionyl-tRNA(Met) + AMP + diphosphate. In terms of biological role, is required not only for elongation of protein synthesis but also for the initiation of all mRNA translation through initiator tRNA(fMet) aminoacylation. This is Methionine--tRNA ligase from Shewanella halifaxensis (strain HAW-EB4).